A 313-amino-acid chain; its full sequence is Aspartate carbamoyltransferase catalytic subunit (313 aa).

2 residues coordinate carbamoyl phosphate: Arg-54 and Thr-55. Lys-82 serves as a coordination point for L-aspartate. Residues Arg-104, His-132, and Gln-135 each coordinate carbamoyl phosphate. Positions 165 and 219 each coordinate L-aspartate. Carbamoyl phosphate contacts are provided by Gly-260 and Pro-261.

This sequence belongs to the aspartate/ornithine carbamoyltransferase superfamily. ATCase family. In terms of assembly, heterododecamer (2C3:3R2) of six catalytic PyrB chains organized as two trimers (C3), and six regulatory PyrI chains organized as three dimers (R2).

It catalyses the reaction carbamoyl phosphate + L-aspartate = N-carbamoyl-L-aspartate + phosphate + H(+). The protein operates within pyrimidine metabolism; UMP biosynthesis via de novo pathway; (S)-dihydroorotate from bicarbonate: step 2/3. Functionally, catalyzes the condensation of carbamoyl phosphate and aspartate to form carbamoyl aspartate and inorganic phosphate, the committed step in the de novo pyrimidine nucleotide biosynthesis pathway. The polypeptide is Aspartate carbamoyltransferase catalytic subunit (Thermobifida fusca (strain YX)).